Consider the following 506-residue polypeptide: NAD(P)H-quinone oxidoreductase subunit 2 (506 aa).

13 helical membrane passes run 14 to 34 (AIIP…VDLA), 42 to 62 (WAPS…TLQW), 79 to 99 (LAIA…LISW), 108 to 128 (PIGE…LLCG), 132 to 152 (LISV…LSGY), 167 to 187 (LLVG…LYGL), 206 to 226 (FITS…IAAV), 240 to 260 (PTPV…AFAI), 276 to 296 (LLFT…ALAQ), 302 to 322 (MLAY…VSGT), 330 to 350 (VLYL…VILF), 374 to 394 (LGLS…GFFG), and 409 to 429 (LLVI…ISVI).

The protein belongs to the complex I subunit 2 family. In terms of assembly, NDH-1 can be composed of about 15 different subunits; different subcomplexes with different compositions have been identified which probably have different functions.

It localises to the cellular thylakoid membrane. It carries out the reaction a plastoquinone + NADH + (n+1) H(+)(in) = a plastoquinol + NAD(+) + n H(+)(out). The enzyme catalyses a plastoquinone + NADPH + (n+1) H(+)(in) = a plastoquinol + NADP(+) + n H(+)(out). In terms of biological role, NDH-1 shuttles electrons from an unknown electron donor, via FMN and iron-sulfur (Fe-S) centers, to quinones in the respiratory and/or the photosynthetic chain. The immediate electron acceptor for the enzyme in this species is believed to be plastoquinone. Couples the redox reaction to proton translocation, and thus conserves the redox energy in a proton gradient. Cyanobacterial NDH-1 also plays a role in inorganic carbon-concentration. This chain is NAD(P)H-quinone oxidoreductase subunit 2, found in Prochlorococcus marinus (strain MIT 9301).